Consider the following 502-residue polypeptide: Phenylacetaldehyde dehydrogenase (502 aa).

251–256 (GSTEVG) serves as a coordination point for NAD(+). Active-site residues include Glu-273 and Cys-307.

It belongs to the aldehyde dehydrogenase family.

It catalyses the reaction 2-phenylacetaldehyde + NAD(+) + H2O = 2-phenylacetate + NADH + 2 H(+). Its pathway is aromatic compound metabolism. Phenylacetaldehyde dehydrogenase that catalyzes the last step in the aerobic styrene degradation pathway by mediating oxidation of phenylacetaldehyde to phenylacetic acid. The sequence is that of Phenylacetaldehyde dehydrogenase (styD) from Pseudomonas fluorescens.